The sequence spans 141 residues: MAPKAAEKKPSTGGKAPAGGKAPAEKKEAGKKTAAAASGDKKKRGKTRKETYSSYIYKVLKQVHPDTGISTRAMSILNSFVNDIFERVATEASKLAAYNKKSTISSREIQTSVRLILPGELAKHAVSEGTKAVTKYSSSAK.

Residues 1 to 10 (MAPKAAEKKP) are compositionally biased toward basic and acidic residues. Residues 1–49 (MAPKAAEKKPSTGGKAPAGGKAPAEKKEAGKKTAAAASGDKKKRGKTRK) form a disordered region. N6-acetyllysine; alternate occurs at positions 8 and 9. Glycyl lysine isopeptide (Lys-Gly) (interchain with G-Cter in SUMO); alternate cross-links involve residues Lys-8 and Lys-9. Over residues 11–22 (STGGKAPAGGKA) the composition is skewed to low complexity. At Lys-15 the chain carries N6-acetyllysine. Residue Lys-26 is modified to N6-acetyllysine; alternate. A Glycyl lysine isopeptide (Lys-Gly) (interchain with G-Cter in SUMO); alternate cross-link involves residue Lys-26. Lys-27 participates in a covalent cross-link: Glycyl lysine isopeptide (Lys-Gly) (interchain with G-Cter in SUMO). Lys-135 participates in a covalent cross-link: Glycyl lysine isopeptide (Lys-Gly) (interchain with G-Cter in ubiquitin).

This sequence belongs to the histone H2B family. The nucleosome is a histone octamer containing two molecules each of H2A, H2B, H3 and H4 assembled in one H3-H4 heterotetramer and two H2A-H2B heterodimers. The octamer wraps approximately 147 bp of DNA. Monoubiquitinated by the ubc2-bre1 complex to form H2BK123ub1. H2BK123ub1 gives a specific tag for epigenetic transcriptional activation and is also prerequisite for H3K4me and H3K79me formation. H2BK123ub1 also modulates the formation of double-strand breaks during meiosis and is a prerequisite for DNA-damage checkpoint activation. In terms of processing, acetylated by gcn5 to form H2BK11ac and H2BK16ac. H2BK16ac can also be formed by esa1. Acetylation of N-terminal lysines and particularly formation of H2BK11acK16ac has a positive effect on transcription. Post-translationally, sumoylation to form H2BK6su or H2BK7su, and probably also H2BK16su or H2BK17su, occurs preferentially near the telomeres and represses gene transcription.

The protein resides in the nucleus. It localises to the chromosome. Functionally, core component of nucleosome. Nucleosomes wrap and compact DNA into chromatin, limiting DNA accessibility to the cellular machineries which require DNA as a template. Histones thereby play a central role in transcription regulation, DNA repair, DNA replication and chromosomal stability. DNA accessibility is regulated via a complex set of post-translational modifications of histones, also called histone code, and nucleosome remodeling. This Aspergillus oryzae (strain ATCC 42149 / RIB 40) (Yellow koji mold) protein is Histone H2B (htb1).